The chain runs to 638 residues: 3D-(3,5/4)-trihydroxycyclohexane-1,2-dione hydrolase (638 aa).

Residue Glu67 coordinates thiamine diphosphate. Residues 442 to 523 (SLPGDLQRLW…INIMLFDNSG (82 aa)) form a thiamine pyrophosphate binding region. Mg(2+) contacts are provided by Asp494 and Asn521.

Belongs to the TPP enzyme family. Mg(2+) serves as cofactor. Thiamine diphosphate is required as a cofactor.

It carries out the reaction 3D-3,5/4-trihydroxycyclohexane-1,2-dione + H2O = 5-deoxy-D-glucuronate + H(+). Its pathway is polyol metabolism; myo-inositol degradation into acetyl-CoA; acetyl-CoA from myo-inositol: step 3/7. Functionally, involved in the cleavage of the C1-C2 bond of 3D-(3,5/4)-trihydroxycyclohexane-1,2-dione (THcHDO) to yield 5-deoxy-glucuronate (5DG). This chain is 3D-(3,5/4)-trihydroxycyclohexane-1,2-dione hydrolase, found in Listeria innocua serovar 6a (strain ATCC BAA-680 / CLIP 11262).